Reading from the N-terminus, the 240-residue chain is Ribonuclease PH (240 aa).

Residues arginine 87 and 125-127 (GTR) contribute to the phosphate site.

It belongs to the RNase PH family. As to quaternary structure, homohexameric ring arranged as a trimer of dimers.

It catalyses the reaction tRNA(n+1) + phosphate = tRNA(n) + a ribonucleoside 5'-diphosphate. Functionally, phosphorolytic 3'-5' exoribonuclease that plays an important role in tRNA 3'-end maturation. Removes nucleotide residues following the 3'-CCA terminus of tRNAs; can also add nucleotides to the ends of RNA molecules by using nucleoside diphosphates as substrates, but this may not be physiologically important. Probably plays a role in initiation of 16S rRNA degradation (leading to ribosome degradation) during starvation. This chain is Ribonuclease PH, found in Pseudomonas syringae pv. tomato (strain ATCC BAA-871 / DC3000).